The primary structure comprises 378 residues: Glutamate 5-kinase (378 aa).

Position 14 (Lys14) interacts with ATP. Positions 54, 141, and 153 each coordinate substrate. Ser173–Asp174 provides a ligand contact to ATP. The region spanning Ala279–Asp356 is the PUA domain.

It belongs to the glutamate 5-kinase family.

Its subcellular location is the cytoplasm. It catalyses the reaction L-glutamate + ATP = L-glutamyl 5-phosphate + ADP. The protein operates within amino-acid biosynthesis; L-proline biosynthesis; L-glutamate 5-semialdehyde from L-glutamate: step 1/2. Its function is as follows. Catalyzes the transfer of a phosphate group to glutamate to form L-glutamate 5-phosphate. The chain is Glutamate 5-kinase from Brucella anthropi (strain ATCC 49188 / DSM 6882 / CCUG 24695 / JCM 21032 / LMG 3331 / NBRC 15819 / NCTC 12168 / Alc 37) (Ochrobactrum anthropi).